The primary structure comprises 222 residues: Orotidine 5'-phosphate decarboxylase (222 aa).

Residues Asp11, Lys30, Asp59–Ile68, Ser115, Pro164–Gly174, Gly187, and Arg188 contribute to the substrate site. The active-site Proton donor is the Lys61.

This sequence belongs to the OMP decarboxylase family. Type 1 subfamily. In terms of assembly, homodimer.

The enzyme catalyses orotidine 5'-phosphate + H(+) = UMP + CO2. It functions in the pathway pyrimidine metabolism; UMP biosynthesis via de novo pathway; UMP from orotate: step 2/2. In terms of biological role, catalyzes the decarboxylation of orotidine 5'-monophosphate (OMP) to uridine 5'-monophosphate (UMP). This is Orotidine 5'-phosphate decarboxylase from Saccharolobus solfataricus (strain ATCC 35092 / DSM 1617 / JCM 11322 / P2) (Sulfolobus solfataricus).